Here is a 430-residue protein sequence, read N- to C-terminus: Small ribosomal subunit protein uS5m (430 aa).

Positions 108–128 are disordered; sequence AGARKGRGKRTKRKRRKDLNR. Basic residues predominate over residues 111 to 125; it reads RKGRGKRTKRKRRKD. The region spanning 218–282 is the S5 DRBM domain; it reads FDTRILEVRN…NRAVHYLHYI (65 aa).

It belongs to the universal ribosomal protein uS5 family. As to quaternary structure, component of the mitochondrial ribosome small subunit (28S) which comprises a 12S rRNA and about 30 distinct proteins.

Its subcellular location is the mitochondrion. This is Small ribosomal subunit protein uS5m (MRPS5) from Bos taurus (Bovine).